The chain runs to 264 residues: Small ribosomal subunit protein uS2 (264 aa).

Residues 222–246 (GRSENKDEQNEQGEQIAPVTNEEKQ) form a disordered region.

The protein belongs to the universal ribosomal protein uS2 family.

The chain is Small ribosomal subunit protein uS2 from Helicobacter hepaticus (strain ATCC 51449 / 3B1).